The chain runs to 179 residues: Bifunctional protein PyrR (179 aa).

Positions 100–112 match the PRPP-binding motif; the sequence is VILVDDVLFTGRT.

Belongs to the purine/pyrimidine phosphoribosyltransferase family. PyrR subfamily. Homodimer and homohexamer; in equilibrium.

The enzyme catalyses UMP + diphosphate = 5-phospho-alpha-D-ribose 1-diphosphate + uracil. Functionally, regulates transcriptional attenuation of the pyrimidine nucleotide (pyr) operon by binding in a uridine-dependent manner to specific sites on pyr mRNA. This disrupts an antiterminator hairpin in the RNA and favors formation of a downstream transcription terminator, leading to a reduced expression of downstream genes. Also displays a weak uracil phosphoribosyltransferase activity which is not physiologically significant. The sequence is that of Bifunctional protein PyrR from Geobacillus sp. (strain WCH70).